Consider the following 479-residue polypeptide: Protein ORD (479 aa).

The tract at residues 102-140 is disordered; sequence KEEETEPESESDLDEGPSTSKQALERMVQRAERKAKEAS. Residues 104 to 116 show a composition bias toward acidic residues; it reads EETEPESESDLDE. A compositionally biased stretch (basic and acidic residues) spans 124-140; the sequence is ALERMVQRAERKAKEAS.

Interacts with Sce.

The protein localises to the nucleus. It localises to the chromosome. It is found in the centromere. In terms of biological role, essential for proper maintenance of sister-chromatid cohesion in both male and female meiosis. Mutations in ord cause premature separation of the sister chromatids in meiosis I and random segregation in both meiotic divisions. Required for chiasma maintenance in female meiosis. Mutations in ord reduce recombination in female meiosis. The polypeptide is Protein ORD (ord) (Drosophila melanogaster (Fruit fly)).